The primary structure comprises 360 residues: Secreted LysM effector LysM2 (360 aa).

The signal sequence occupies residues 1–21 (MKISSLSILPLLGVVSAGIHG). A LysM 1 domain is found at 37–85 (TWYLDLVDDSYTCENIESQWDLSHEAFVAWNPGVKKDCSGLKVGLSVCV). The segment covering 94-113 (ATPTSEASTSSETSSASPTA) has biased composition (low complexity). The disordered stretch occupies residues 94–125 (ATPTSEASTSSETSSASPTASRPPLPSPTQDG). Asn129 carries an N-linked (GlcNAc...) asparagine glycan. Residues 132 to 179 (KFHQAVSGDTCSKIISRYKPITLDQFIEWNPALEKDCSGLWSGYYYCV) form the LysM 2 domain. Asn204 is a glycosylation site (N-linked (GlcNAc...) asparagine). LysM domains follow at residues 225–272 (RWHK…YYCI) and 311–357 (KWHQ…YVCV).

The protein belongs to the secreted LysM effector family.

It localises to the secreted. The protein localises to the cell wall. Functionally, secreted effector that binds two substrates, chitin and N-linked oligosaccharides associated with human skin glycoproteins. Could provide the pathogen with three important functions including shielding host cell wall chitin from the human immune system, shielding the pathogen's glycoproteins from host degradation and immune surveillance, and helping facilitate pathogen adhesion to human skin. The sequence is that of Secreted LysM effector LysM2 from Trichophyton rubrum (strain ATCC MYA-4607 / CBS 118892) (Athlete's foot fungus).